We begin with the raw amino-acid sequence, 441 residues long: Polyketide methyltransferase ustM (441 aa).

A methyltransferase (CMeT) domain region spans residues 266-368 (LEVGAGLGGT…VRKLLRGGGF (103 aa)).

This sequence belongs to the methyltransferase superfamily.

It functions in the pathway secondary metabolite biosynthesis. In terms of biological role, polyketide methyltransferase; part of the gene cluster that mediates the biosynthesis of ustilaginoidins, dimeric gamma-naphthopyrones isolated from different fungal species. The first step in the biosynthesis of ustilaginoidins is the production of gamma-naphthopyrone precursor YWA1 by the non-reducing polyketide synthase ustP, via condensation of one acetyl-CoA starter unit with 6 malonyl-CoA units. YWA1 is then probably substrate of the ustZ to yield norrubrofusarin via a dehydration reaction. A key enzyme in the biosynthetic pathway is the laccase ustL, which catalyzes the oxidative dimerization of norrubrofusarin to ustilaginoidin A. It can produce the M- and P-atropisomers in varying amounts, depending on the reaction conditions. For the biosynthesis of 3-methylustilaginoid in derivatives such as chaetochromin A, a methylated derivative of YWA1 is required. The C-methylation is considered to be catalyzed by ustM, the phosphopantetheine attachment site of which indicates that it acts on the growing polyketide chain before release of the product. For the biosynthesis of chaetochromin A, it is assumed that saturation of the D2 double bond takes place before dimerization, and is probably catalyzed by an external reductase because no candidate gene was identified within the cluster. The sequence is that of Polyketide methyltransferase ustM from Ustilaginoidea virens (Rice false smut fungus).